We begin with the raw amino-acid sequence, 311 residues long: Putative ankyrin repeat protein RF_0923 (311 aa).

ANK repeat units follow at residues 42–71 (IDNT…EQAI), 77–106 (NGNT…PQAI), 112–141 (NGNT…PQAI), 147–176 (NGNT…EQAI), and 182–213 (KGCT…AINH).

The chain is Putative ankyrin repeat protein RF_0923 from Rickettsia felis (strain ATCC VR-1525 / URRWXCal2) (Rickettsia azadi).